A 472-amino-acid chain; its full sequence is NADH-quinone oxidoreductase subunit N (472 aa).

14 consecutive transmembrane segments (helical) span residues 11–31, 43–63, 67–87, 103–123, 125–145, 159–179, 200–220, 234–254, 265–285, 293–313, 318–338, 362–384, 401–421, and 446–466; these read AELS…FLPA, ILLT…LFGG, STPM…LVFL, GEFY…VSAG, FLLF…LVAF, FILS…MIYG, VLAL…VPFH, VSAY…MIIL, WSEI…LFAI, FMAF…LAGT, ASLV…FGVI, PKLT…FAGF, LIVF…LLIV, and LLVC…YQLL.

Belongs to the complex I subunit 2 family. NDH-1 is composed of 14 different subunits. Subunits NuoA, H, J, K, L, M, N constitute the membrane sector of the complex.

The protein resides in the cell inner membrane. The catalysed reaction is a quinone + NADH + 5 H(+)(in) = a quinol + NAD(+) + 4 H(+)(out). In terms of biological role, NDH-1 shuttles electrons from NADH, via FMN and iron-sulfur (Fe-S) centers, to quinones in the respiratory chain. The immediate electron acceptor for the enzyme in this species is believed to be a menaquinone. Couples the redox reaction to proton translocation (for every two electrons transferred, four hydrogen ions are translocated across the cytoplasmic membrane), and thus conserves the redox energy in a proton gradient. This is NADH-quinone oxidoreductase subunit N from Phocaeicola vulgatus (strain ATCC 8482 / DSM 1447 / JCM 5826 / CCUG 4940 / NBRC 14291 / NCTC 11154) (Bacteroides vulgatus).